An 881-amino-acid chain; its full sequence is MLRSLLLLAPLVGAAVLGVRDNSQECPGYKATNIREGRNSLTADLTLAGTPCNTYGTDLKNLKLLVEYQTDKRLHVKIYDADEEVYQVPESVLPRVDGKGGSGKKSALKFDYQANPFSFKVKRGGEVLFDTSGSNLIFQSQYLNLRTWLPEDPNLYGLGEHTDSLRLETTNYTRTLWNRDAYAIPEKTNLYGTHPVYYDHRGQDGTHGVFLLNSNGMDIKIDKTEDGKQYLEYNTLGGVFDFYFFTGATPKDASIEYAKVVGLPAMQSYWTFGFHQCRYGYRDVFEVAEVVYNYTQAKIPLETMWTDIDYMDRRRVFTLDPERFPLEKLRELVTYLHNHNQRYIVMVDPAVSVSDNVGYNDGMEQGIFLQTQNGSLYKGAVWPGVTAYPDWFHPDIQKYWNDQFAKFFDRKTGVDIDGLWIDMNEAANFCPYPCSDPEGYSRDNDLPPAAPPVRPSNPRPLPGFPGDFQPSSSSKRSTKGSKVGLPNRDLINPPYMIRNEAGSLSNKTINTDIIHAGEGYAEYDTHNLYGTMMSSASRNAMQHRRPEVRPLVITRSTYAGAGAHVGHWLGDNISEWSKYRVSIAQMLAFASMFQVPMIGSDVCGFGGNTTEELCARWARLGAFYTFFRNHNEITGIPQEFYRWPTVAESARKAIDIRYRLLDYIYTAFHRQTQTGEPFLQPMFYLYPKDKNTFSNQLQFFYGDAILVSPVTDGSQTSVDAYFPDDIFYDWHTGAALRGRGANVTLGNIDVTEIPIHIRGGSIIPIRSESAMTTTELRKKGFELIIAPGLDGTASGSLYLDDGDSIEQRATLELEFTYRKGRLRVKGKFGFRTDVKINAVTLLGQSAPASKSGSVASFDSGRQAVTIKTSLDLTGPSEIDLN.

Residues 1-14 form the signal peptide; the sequence is MLRSLLLLAPLVGA. N-linked (GlcNAc...) asparagine glycans are attached at residues Asn171, Asn293, and Asn373. Asp422 serves as the catalytic Nucleophile. Glu425 is a catalytic residue. A disordered region spans residues 440-485; it reads YSRDNDLPPAAPPVRPSNPRPLPGFPGDFQPSSSSKRSTKGSKVGL. The segment covering 448-463 has biased composition (pro residues); the sequence is PAAPPVRPSNPRPLPG. The N-linked (GlcNAc...) asparagine glycan is linked to Asn506. Asp571 (proton donor) is an active-site residue. N-linked (GlcNAc...) asparagine glycosylation is found at Asn572, Asn608, and Asn742.

Belongs to the glycosyl hydrolase 31 family.

The protein resides in the secreted. The enzyme catalyses Hydrolysis of terminal, non-reducing (1-&gt;4)-linked alpha-D-glucose residues with release of alpha-D-glucose.. It carries out the reaction Hydrolysis of terminal, non-reducing beta-D-glucosyl residues with release of beta-D-glucose.. Glucosidase involved in the degradation of cellulosic biomass. Has both alpha- and beta-glucosidase activity. The chain is Probable alpha/beta-glucosidase agdC (agdC) from Neosartorya fischeri (strain ATCC 1020 / DSM 3700 / CBS 544.65 / FGSC A1164 / JCM 1740 / NRRL 181 / WB 181) (Aspergillus fischerianus).